Reading from the N-terminus, the 345-residue chain is MAMIPSISKLLFVAICLFVYMGLSFGDFSIVGYSQNDLTSTERLIQLFESWMLKHNKIYKNIDEKIYRFEIFKDNLKYIDETNKKNNSYWLGLNVFADMSNDEFKEKYTGSIAGNYTTTELSYEEVLNDGDVNIPEYVDWRQKGAVTPVKNQGSCGSCWAFSAVVTIEGIIKIRTGNLNEYSEQELLDCDRRSYGCNGGYPWSALQLVAQYGIHYRNTYPYEGVQRYCRSREKGPYAAKTDGVRQVQPYNEGALLYSIANQPVSVVLEAAGKDFQLYRGGIFVGPCGNKVDHAVAAVGYGPNYILIKNSWGTGWGENGYIRIKRGTGNSYGVCGLYTSSFYPVKN.

An N-terminal signal peptide occupies residues 1–18 (MAMIPSISKLLFVAICLF). Residues 19–133 (VYMGLSFGDF…EEVLNDGDVN (115 aa)) constitute a propeptide, activation peptide. 3 cysteine pairs are disulfide-bonded: Cys155/Cys196, Cys189/Cys228, and Cys286/Cys333. The active site involves Cys158. Cys158 is a binding site for E64. Cys158 serves as a coordination point for leupeptin. Active-site residues include His292 and Asn308.

It belongs to the peptidase C1 family.

The catalysed reaction is Hydrolysis of proteins with broad specificity for peptide bonds, but preference for an amino acid bearing a large hydrophobic side chain at the P2 position. Does not accept Val in P1'.. With respect to regulation, repressed by the active-site-directed cysteine protease inhibitor E64 (L-trans-epoxysuccinyl-leucylamide-(4-guanido)-butane) produced by Aspergillus japonicus. Inhibited by the inhibitor of cysteine proteases from Trypanosoma brucei (TbICP, rhodesain) and Colocasia esculenta cv. Kaohsiung no. 1 (CeCPI, tarocystatin). Repressed by leupeptin, a peptidic cysteine, serine and threonine protease inhibitor. In terms of biological role, cysteine proteinase with a high level of diversity in substrate specificity, an amino acid bearing a large hydrophobic side chain at the P2 position is preferred. The chain is Papain from Carica papaya (Papaya).